The following is a 130-amino-acid chain: DNA-directed RNA polymerase subunit omega (130 aa).

Residues 110 to 130 (EELLKGLEGLAPPEEQPEEDE) form a disordered region.

It belongs to the RNA polymerase subunit omega family. In terms of assembly, the RNAP catalytic core consists of 2 alpha, 1 beta, 1 beta' and 1 omega subunit. When a sigma factor is associated with the core the holoenzyme is formed, which can initiate transcription.

The enzyme catalyses RNA(n) + a ribonucleoside 5'-triphosphate = RNA(n+1) + diphosphate. Promotes RNA polymerase assembly. Latches the N- and C-terminal regions of the beta' subunit thereby facilitating its interaction with the beta and alpha subunits. The polypeptide is DNA-directed RNA polymerase subunit omega (Bradyrhizobium sp. (strain BTAi1 / ATCC BAA-1182)).